A 305-amino-acid polypeptide reads, in one-letter code: Homoserine O-acetyltransferase (305 aa).

Cys-142 acts as the Acyl-thioester intermediate in catalysis. Lys-163 and Ser-192 together coordinate substrate. His-235 (proton acceptor) is an active-site residue. Residue Glu-237 is part of the active site. Substrate is bound at residue Arg-249.

The protein belongs to the MetA family.

The protein localises to the cytoplasm. It catalyses the reaction L-homoserine + acetyl-CoA = O-acetyl-L-homoserine + CoA. The protein operates within amino-acid biosynthesis; L-methionine biosynthesis via de novo pathway; O-acetyl-L-homoserine from L-homoserine: step 1/1. Transfers an acetyl group from acetyl-CoA to L-homoserine, forming acetyl-L-homoserine. The chain is Homoserine O-acetyltransferase from Bacteroides thetaiotaomicron (strain ATCC 29148 / DSM 2079 / JCM 5827 / CCUG 10774 / NCTC 10582 / VPI-5482 / E50).